A 144-amino-acid chain; its full sequence is MAKKVEAYIKLQIPAGKANPSPPVGPALGQRGVNIMEFCKAFNAATQQMEQGLPIPVVITVYSDRSFTFITKTPPASVLLKKAAGIQSGSGTPNTKKVAKLNVSQLEEIAKVKKPDLTAADLAAAVRSIAGTARSMGIEVEGLE.

Belongs to the universal ribosomal protein uL11 family. In terms of assembly, part of the ribosomal stalk of the 50S ribosomal subunit. Interacts with L10 and the large rRNA to form the base of the stalk. L10 forms an elongated spine to which L12 dimers bind in a sequential fashion forming a multimeric L10(L12)X complex. Post-translationally, one or more lysine residues are methylated.

Its function is as follows. Forms part of the ribosomal stalk which helps the ribosome interact with GTP-bound translation factors. The polypeptide is Large ribosomal subunit protein uL11 (Legionella pneumophila (strain Paris)).